The primary structure comprises 231 residues: Large ribosomal subunit protein uL1 (231 aa).

Belongs to the universal ribosomal protein uL1 family. In terms of assembly, part of the 50S ribosomal subunit.

Functionally, binds directly to 23S rRNA. The L1 stalk is quite mobile in the ribosome, and is involved in E site tRNA release. Protein L1 is also a translational repressor protein, it controls the translation of the L11 operon by binding to its mRNA. The polypeptide is Large ribosomal subunit protein uL1 (Ectopseudomonas mendocina (strain ymp) (Pseudomonas mendocina)).